A 101-amino-acid polypeptide reads, in one-letter code: Guanyl-specific ribonuclease St (101 aa).

Residues cysteine 4 and cysteine 54 are joined by a disulfide bond. Glutamate 61 acts as the Proton acceptor in catalysis. The active-site Proton donor is the histidine 91.

Belongs to the ribonuclease N1/T1 family.

It carries out the reaction [RNA] containing guanosine + H2O = an [RNA fragment]-3'-guanosine-3'-phosphate + a 5'-hydroxy-ribonucleotide-3'-[RNA fragment].. This Saccharopolyspora erythraea (Streptomyces erythraeus) protein is Guanyl-specific ribonuclease St.